Reading from the N-terminus, the 361-residue chain is Histidinol-phosphate aminotransferase (361 aa).

Position 216 is an N6-(pyridoxal phosphate)lysine (Lys216).

This sequence belongs to the class-II pyridoxal-phosphate-dependent aminotransferase family. Histidinol-phosphate aminotransferase subfamily. Homodimer. The cofactor is pyridoxal 5'-phosphate.

The catalysed reaction is L-histidinol phosphate + 2-oxoglutarate = 3-(imidazol-4-yl)-2-oxopropyl phosphate + L-glutamate. It functions in the pathway amino-acid biosynthesis; L-histidine biosynthesis; L-histidine from 5-phospho-alpha-D-ribose 1-diphosphate: step 7/9. This chain is Histidinol-phosphate aminotransferase, found in Francisella philomiragia subsp. philomiragia (strain ATCC 25017 / CCUG 19701 / FSC 153 / O#319-036).